The chain runs to 196 residues: Probable nicotinate-nucleotide adenylyltransferase (196 aa).

It belongs to the NadD family.

It catalyses the reaction nicotinate beta-D-ribonucleotide + ATP + H(+) = deamido-NAD(+) + diphosphate. It functions in the pathway cofactor biosynthesis; NAD(+) biosynthesis; deamido-NAD(+) from nicotinate D-ribonucleotide: step 1/1. Catalyzes the reversible adenylation of nicotinate mononucleotide (NaMN) to nicotinic acid adenine dinucleotide (NaAD). The protein is Probable nicotinate-nucleotide adenylyltransferase of Caldicellulosiruptor bescii (strain ATCC BAA-1888 / DSM 6725 / KCTC 15123 / Z-1320) (Anaerocellum thermophilum).